A 94-amino-acid polypeptide reads, in one-letter code: Small ribosomal subunit protein bS20 (94 aa).

It belongs to the bacterial ribosomal protein bS20 family.

Binds directly to 16S ribosomal RNA. In Acaryochloris marina (strain MBIC 11017), this protein is Small ribosomal subunit protein bS20.